Here is a 251-residue protein sequence, read N- to C-terminus: tRNA-cytidine(32) 2-sulfurtransferase 2 (251 aa).

Residues 33-38 (SGGKDS) carry the PP-loop motif motif. [4Fe-4S] cluster contacts are provided by C108, C111, and C199.

This sequence belongs to the TtcA family. Homodimer. Requires Mg(2+) as cofactor. [4Fe-4S] cluster is required as a cofactor.

The protein resides in the cytoplasm. The enzyme catalyses cytidine(32) in tRNA + S-sulfanyl-L-cysteinyl-[cysteine desulfurase] + AH2 + ATP = 2-thiocytidine(32) in tRNA + L-cysteinyl-[cysteine desulfurase] + A + AMP + diphosphate + H(+). It functions in the pathway tRNA modification. In terms of biological role, catalyzes the ATP-dependent 2-thiolation of cytidine in position 32 of tRNA, to form 2-thiocytidine (s(2)C32). The sulfur atoms are provided by the cysteine/cysteine desulfurase (IscS) system. In Francisella tularensis subsp. tularensis (strain WY96-3418), this protein is tRNA-cytidine(32) 2-sulfurtransferase 2.